The following is a 93-amino-acid chain: MDAKVVAVLALVLAALCISDGKPVSLSYRCPCRFFESHIARANVKHLKILNTPNCALQIVARLKNNNRQVCIDPKLKWIQEYLEKALNKRLKM.

The N-terminal stretch at 1-21 is a signal peptide; it reads MDAKVVAVLALVLAALCISDG. The Receptor activation motif motif lies at 22 to 23; that stretch reads KP. Positions 29 to 33 are receptor and heparin binding; it reads RCPCR. 2 disulfides stabilise this stretch: Cys-30-Cys-55 and Cys-32-Cys-71. Receptor binding stretches follow at residues 39 to 41, 48 to 50, and 60 to 70; these read IAR, KIL, and VARLKNNNRQV. Heparin-binding positions include 41-51, Arg-62, Gln-69, and Lys-85; that span reads RANVKHLKILN.

It belongs to the intercrine alpha (chemokine CxC) family. Monomer or homodimer; in equilibrium. Dimer formation is induced by non acidic pH and the presence of multivalent anions, and by binding to CXCR4 or heparin. Monomeric form is required for full chemotactic activity and resistance to ischemia/reperfusion injury, whereas the dimeric form acts as a partial agonist of CXCR4, stimulating Ca2+ mobilization but with no chemotactic activity and instead acts as a selective antagonist that blocks chemotaxis induced by the monomeric form. Interacts with the N-terminus of ACKR3. Interacts with integrin subunit ITGB3 (via the allosteric site (site 2)). Interacts with TNFAIP6 (via Link domain). In terms of tissue distribution, highest expression levels detected in kidney, liver, spleen and muscle. Isoform Alpha is expressed ubiquitously but at varying levels, while isoform Beta displays tissue-specific expression, with expression detected in kidney, liver, heart, spleen and muscle but not in lung, colon, brain, skin and stomach.

It localises to the secreted. Its function is as follows. Chemoattractant active on T-lymphocytes and monocytes but not neutrophils. Activates the C-X-C chemokine receptor CXCR4 to induce a rapid and transient rise in the level of intracellular calcium ions and chemotaxis. Also binds to atypical chemokine receptor ACKR3, which activates the beta-arrestin pathway and acts as a scavenger receptor for SDF-1. Binds to the allosteric site (site 2) of integrins and activates integrins ITGAV:ITGB3, ITGA4:ITGB1 and ITGA5:ITGB1 in a CXCR4-independent manner. Acts as a positive regulator of monocyte migration and a negative regulator of monocyte adhesion via the LYN kinase. Stimulates migration of monocytes and T-lymphocytes through its receptors, CXCR4 and ACKR3, and decreases monocyte adherence to surfaces coated with ICAM-1, a ligand for beta-2 integrins. SDF1A/CXCR4 signaling axis inhibits beta-2 integrin LFA-1 mediated adhesion of monocytes to ICAM-1 through LYN kinase. Plays a protective role after myocardial infarction. Induces down-regulation and internalization of ACKR3 expressed in various cells. Has several critical functions during embryonic development; required for B-cell lymphopoiesis, myelopoiesis in bone marrow and heart ventricular septum formation. Stimulates the proliferation of bone marrow-derived B-cell progenitors in the presence of IL7 as well as growth of stromal cell-dependent pre-B-cells. The protein is Stromal cell-derived factor 1 (Cxcl12) of Mus musculus (Mouse).